Here is a 127-residue protein sequence, read N- to C-terminus: MARITAEDCNKIIPDRFRLVVLATRYAKLLNYKVETNHIKKEKLDKPPVIALRRIAAGKVSVAQLEQDLINSLRTRTMIEPLVNQDESEAVEEKFEYLPEVYIGEDYSDLDDQIFIDEHGEDYETDK.

The protein belongs to the RNA polymerase subunit omega family. The RNAP catalytic core consists of 2 alpha, 1 beta, 1 beta' and 1 omega subunit. When a sigma factor is associated with the core the holoenzyme is formed, which can initiate transcription.

The catalysed reaction is RNA(n) + a ribonucleoside 5'-triphosphate = RNA(n+1) + diphosphate. In terms of biological role, promotes RNA polymerase assembly. Latches the N- and C-terminal regions of the beta' subunit thereby facilitating its interaction with the beta and alpha subunits. The polypeptide is DNA-directed RNA polymerase subunit omega (Rickettsia rickettsii (strain Iowa)).